The following is a 304-amino-acid chain: Deoxyribonuclease-1-like 1 (304 aa).

The first 24 residues, 1 to 24 (MPYMAMHGLTVALLLIFLAGGTEA), serve as a signal peptide directing secretion. N-linked (GlcNAc...) asparagine glycosylation is present at Asn-92. Glu-103 is an active-site residue. N-linked (GlcNAc...) asparagine glycosylation occurs at Asn-123. The active site involves His-154. An intrachain disulfide couples Cys-193 to Cys-230. The N-linked (GlcNAc...) asparagine glycan is linked to Asn-229.

It belongs to the DNase I family.

The protein resides in the endoplasmic reticulum. In Cricetulus griseus (Chinese hamster), this protein is Deoxyribonuclease-1-like 1 (DNASE1L1).